A 600-amino-acid polypeptide reads, in one-letter code: CDK5RAP1-like protein (600 aa).

Residues 45–66 (LSSAAHPPPPPPRRLARSGPSR) are disordered. Residues 93-222 (GRIYHETYGC…LPRLLQEVDY (130 aa)) enclose the MTTase N-terminal domain. [4Fe-4S] cluster-binding residues include C102, C139, C185, C260, C264, and C267. The region spanning 246–501 (SDNSVTAFVS…ISTFRETTAK (256 aa)) is the Radical SAM core domain. The region spanning 504–580 (DSQVGTVQLV…TASLSGDVIA (77 aa)) is the TRAM domain.

The protein belongs to the methylthiotransferase family. MiaB subfamily. It depends on [4Fe-4S] cluster as a cofactor.

In terms of biological role, potential regulator of CDK5 activity. This is CDK5RAP1-like protein from Oryza sativa subsp. japonica (Rice).